The primary structure comprises 38 residues: Photosystem II reaction center protein L (38 aa).

A helical membrane pass occupies residues 17 to 37; it reads GLYWGLLLIFVLAVLFSSYFF.

Belongs to the PsbL family. As to quaternary structure, PSII is composed of 1 copy each of membrane proteins PsbA, PsbB, PsbC, PsbD, PsbE, PsbF, PsbH, PsbI, PsbJ, PsbK, PsbL, PsbM, PsbT, PsbX, PsbY, PsbZ, Psb30/Ycf12, at least 3 peripheral proteins of the oxygen-evolving complex and a large number of cofactors. It forms dimeric complexes.

It is found in the plastid. The protein localises to the chloroplast thylakoid membrane. Its function is as follows. One of the components of the core complex of photosystem II (PSII). PSII is a light-driven water:plastoquinone oxidoreductase that uses light energy to abstract electrons from H(2)O, generating O(2) and a proton gradient subsequently used for ATP formation. It consists of a core antenna complex that captures photons, and an electron transfer chain that converts photonic excitation into a charge separation. This subunit is found at the monomer-monomer interface and is required for correct PSII assembly and/or dimerization. This chain is Photosystem II reaction center protein L, found in Staurastrum punctulatum (Green alga).